The chain runs to 216 residues: UPF0502 protein Pmen_2627 (216 aa).

Belongs to the UPF0502 family.

This is UPF0502 protein Pmen_2627 from Ectopseudomonas mendocina (strain ymp) (Pseudomonas mendocina).